A 201-amino-acid polypeptide reads, in one-letter code: Ras-related protein Rab-1B (201 aa).

Met-1 carries the N-acetylmethionine modification. GTP is bound by residues Ser-17, Gly-18, Val-19, Gly-20, Lys-21, Ser-22, Cys-23, Tyr-33, Thr-34, Glu-35, Ser-36, Ser-39, and Thr-40. Ser-22 provides a ligand contact to Mg(2+). Residues 30–45 (DDTYTESYISTIGVDF) carry the Switch 1 motif. Positions 40 and 63 each coordinate Mg(2+). Residues 64-83 (TAGQERFRTITSSYYRGAHG) form a switch 2 region; required for interaction with REP1/CHM region. The Switch 2 motif lies at 65–80 (AGQERFRTITSSYYRG). Gly-66 contacts GTP. Ser-76 bears the (Microbial infection) O-(2-cholinephosphoryl)serine mark. Tyr-77 carries the (Microbial infection) O-AMP-tyrosine modification. Residues Asn-121, Lys-122, Asp-124, Ser-151, Ala-152, and Lys-153 each contribute to the GTP site. A disordered region spans residues 174 to 201 (GPGAASGGERPNLKIDSTPVKPAGGGCC). S-geranylgeranyl cysteine attachment occurs at residues Cys-200 and Cys-201. Cys-201 is subject to Cysteine methyl ester.

This sequence belongs to the small GTPase superfamily. Rab family. Interacts with MICAL1 and MICAL2. Interacts (in GTP-bound form) with MICALCL, MICAL1 and MILCAL3. Interacts with GDI1; the interaction requires the GDP-bound state. Interacts with CHM/REP1; the interaction requires the GDP-bound form and is necessary for prenylation by GGTase II. Interacts with RabGAP TBC1D20. Interacts (in GDP-bound form) with lipid phosphatase MTMR6 (via GRAM domain); the interaction regulates MTMR6 recruitment to the endoplasmic reticulum-Golgi intermediate compartment. Interacts (in GDP-bound form) with lipid phosphatase MTMR7. In terms of assembly, (Microbial infection) Interacts with L.pneumophila AnkX. Interacts with L.pneumophila Lem3. Interacts with L.pneumophila SidD. Interacts with L.pneumophila DrrA. The cofactor is Mg(2+). Post-translationally, prenylated; by GGTase II, only after interaction of the substrate with Rab escort protein 1 (REP1). In terms of processing, (Microbial infection) AMPylation at Tyr-77 by L.pneumophila DrrA occurs in the switch 2 region and leads to moderate inactivation of the GTPase activity. It appears to prolong the lifetime of the GTP state of RAB1B by restricting access of GTPase effectors to switch 2 and blocking effector-stimulated GTP hydrolysis, thereby rendering RAB1B constitutively active. It is later de-AMPylated by L.pneumophila SidD, releasing RAB1B from bacterial phagosomes. (Microbial infection) Phosphocholinated at Ser-76 by L.pneumophila AnkX, leading to displace GDP dissociation inhibitors (GDI). Both GDP-bound and GTP-bound forms can be phosphocholinated. Dephosphocholinated by L.pneumophila Lem3, restoring accessibility to L.pneumophila GTPase effector LepB. Post-translationally, (Microbial infection) Glycosylated by S.typhimurium protein Ssek3: arginine GlcNAcylation prevents GTPase activity, thereby disrupting vesicular protein transport from the endoplasmic reticulum (ER) to the Golgi compartment.

Its subcellular location is the cytoplasm. It is found in the membrane. It localises to the preautophagosomal structure membrane. The protein localises to the perinuclear region. It carries out the reaction GTP + H2O = GDP + phosphate + H(+). Regulated by guanine nucleotide exchange factors (GEFs) which promote the exchange of bound GDP for free GTP. Regulated by GTPase activating proteins (GAPs) including TBC1D20 which increases the GTP hydrolysis activity. Inhibited by GDP dissociation inhibitors (GDIs). Its function is as follows. The small GTPases Rab are key regulators of intracellular membrane trafficking, from the formation of transport vesicles to their fusion with membranes. Rabs cycle between an inactive GDP-bound form and an active GTP-bound form that is able to recruit to membranes different set of downstream effectors directly responsible for vesicle formation, movement, tethering and fusion. Plays a role in the initial events of the autophagic vacuole development which take place at specialized regions of the endoplasmic reticulum. Regulates vesicular transport between the endoplasmic reticulum and successive Golgi compartments. Required to modulate the compacted morphology of the Golgi. Promotes the recruitment of lipid phosphatase MTMR6 to the endoplasmic reticulum-Golgi intermediate compartment. This Homo sapiens (Human) protein is Ras-related protein Rab-1B.